The chain runs to 157 residues: SsrA-binding protein (157 aa).

Residues 131–157 (KQLHDKRDTEKKRDWSREKGRIMRARG) form a disordered region. The segment covering 132-151 (QLHDKRDTEKKRDWSREKGR) has biased composition (basic and acidic residues).

This sequence belongs to the SmpB family.

It is found in the cytoplasm. Functionally, required for rescue of stalled ribosomes mediated by trans-translation. Binds to transfer-messenger RNA (tmRNA), required for stable association of tmRNA with ribosomes. tmRNA and SmpB together mimic tRNA shape, replacing the anticodon stem-loop with SmpB. tmRNA is encoded by the ssrA gene; the 2 termini fold to resemble tRNA(Ala) and it encodes a 'tag peptide', a short internal open reading frame. During trans-translation Ala-aminoacylated tmRNA acts like a tRNA, entering the A-site of stalled ribosomes, displacing the stalled mRNA. The ribosome then switches to translate the ORF on the tmRNA; the nascent peptide is terminated with the 'tag peptide' encoded by the tmRNA and targeted for degradation. The ribosome is freed to recommence translation, which seems to be the essential function of trans-translation. The polypeptide is SsrA-binding protein (Rhodopseudomonas palustris (strain BisB18)).